A 589-amino-acid polypeptide reads, in one-letter code: Threonine--tRNA ligase (589 aa).

The interval 191 to 487 is catalytic; the sequence is DHRKIGKNLG…LLEQTKGNFP (297 aa). Residues Cys-284, His-335, and His-464 each coordinate Zn(2+).

Belongs to the class-II aminoacyl-tRNA synthetase family. In terms of assembly, homodimer. Zn(2+) serves as cofactor.

The protein resides in the cytoplasm. It catalyses the reaction tRNA(Thr) + L-threonine + ATP = L-threonyl-tRNA(Thr) + AMP + diphosphate + H(+). Its function is as follows. Catalyzes the attachment of threonine to tRNA(Thr) in a two-step reaction: L-threonine is first activated by ATP to form Thr-AMP and then transferred to the acceptor end of tRNA(Thr). Also edits incorrectly charged L-seryl-tRNA(Thr). The polypeptide is Threonine--tRNA ligase (Mycoplasmopsis pulmonis (strain UAB CTIP) (Mycoplasma pulmonis)).